A 276-amino-acid polypeptide reads, in one-letter code: NH(3)-dependent NAD(+) synthetase (276 aa).

43 to 50 contacts ATP; it reads GISGGVDS. Mg(2+) is bound at residue aspartate 49. Arginine 146 serves as a coordination point for deamido-NAD(+). Threonine 166 contacts ATP. Glutamate 171 is a Mg(2+) binding site. Residues lysine 179 and aspartate 186 each coordinate deamido-NAD(+). ATP contacts are provided by lysine 195 and threonine 217. Deamido-NAD(+) is bound at residue 266 to 267; that stretch reads HK.

This sequence belongs to the NAD synthetase family. In terms of assembly, homodimer.

The catalysed reaction is deamido-NAD(+) + NH4(+) + ATP = AMP + diphosphate + NAD(+) + H(+). It functions in the pathway cofactor biosynthesis; NAD(+) biosynthesis; NAD(+) from deamido-NAD(+) (ammonia route): step 1/1. Functionally, catalyzes the ATP-dependent amidation of deamido-NAD to form NAD. Uses ammonia as a nitrogen source. This Shewanella woodyi (strain ATCC 51908 / MS32) protein is NH(3)-dependent NAD(+) synthetase.